Here is a 270-residue protein sequence, read N- to C-terminus: Phospholysine phosphohistidine inorganic pyrophosphate phosphatase (270 aa).

Mg(2+)-binding residues include Asp17 and Ser19. Residues 17-19 (DIS), 54-55 (TN), and Lys189 contribute to the substrate site. Asp214 contacts Mg(2+).

It belongs to the HAD-like hydrolase superfamily. Homodimer. Requires Mg(2+) as cofactor.

It localises to the cytoplasm. The protein resides in the nucleus. The catalysed reaction is diphosphate + H2O = 2 phosphate + H(+). Phosphatase that hydrolyzes imidodiphosphate, 3-phosphohistidine and 6-phospholysine. Has broad substrate specificity and can also hydrolyze inorganic diphosphate, but with lower efficiency. This Rattus norvegicus (Rat) protein is Phospholysine phosphohistidine inorganic pyrophosphate phosphatase (Lhpp).